A 338-amino-acid polypeptide reads, in one-letter code: Elongation factor Ts, mitochondrial (338 aa).

A mitochondrion-targeting transit peptide spans 1 to 42 (MSPSIAMFTLTPNARALASKTSKMDLIKNLRERTGAPIVDVK).

It belongs to the EF-Ts family.

It is found in the mitochondrion. Its function is as follows. Associates with the EF-Tu.GDP complex and induces the exchange of GDP to GTP. It remains bound to the aminoacyl-tRNA.EF-Tu.GTP complex up to the GTP hydrolysis stage on the ribosome. The sequence is that of Elongation factor Ts, mitochondrial from Ostreococcus tauri.